A 742-amino-acid polypeptide reads, in one-letter code: NAD(P)H-quinone oxidoreductase subunit 5, chloroplastic (742 aa).

A run of 16 helical transmembrane segments spans residues 9-29, 40-60, 89-109, 125-145, 147-167, 185-205, 219-239, 258-278, 283-303, 327-347, 354-374, 396-416, 425-445, 550-570, 606-626, and 722-742; these read WIIPFLPLPVPMLIGLGLLLF, WSFQSVLLLSIVMIFSMNLSI, IDPLTSIMLILITTVGIMVLI, FAYMSFFSTSMLGLVTSSNLI, IYIFWELVGICSYLLIGFWFT, GDFGLLLGILGFYWITGSFEF, NEVNFLFVTLCAILLFAGAIA, TPISALIHAATMVAAGIFLVA, LFIVIPHIMNFISLIGIITVF, LGYMMLALGMGSYRSALFHLI, ALLFLGSGSVIHSMETLVGYC, NSFLLGTLSLCGIPPLACFWS, WLYSPIFGIIAWSTAGLTAFY, LFPILILILFTLFVGFLGIPF, FFSVSIASFGIFIAFFLYKPV, and YLFFYFSYVAIFLLIYYFFNV.

The protein belongs to the complex I subunit 5 family. NDH is composed of at least 16 different subunits, 5 of which are encoded in the nucleus.

The protein localises to the plastid. The protein resides in the chloroplast thylakoid membrane. The enzyme catalyses a plastoquinone + NADH + (n+1) H(+)(in) = a plastoquinol + NAD(+) + n H(+)(out). It carries out the reaction a plastoquinone + NADPH + (n+1) H(+)(in) = a plastoquinol + NADP(+) + n H(+)(out). In terms of biological role, NDH shuttles electrons from NAD(P)H:plastoquinone, via FMN and iron-sulfur (Fe-S) centers, to quinones in the photosynthetic chain and possibly in a chloroplast respiratory chain. The immediate electron acceptor for the enzyme in this species is believed to be plastoquinone. Couples the redox reaction to proton translocation, and thus conserves the redox energy in a proton gradient. In Lactuca sativa (Garden lettuce), this protein is NAD(P)H-quinone oxidoreductase subunit 5, chloroplastic (ndhF).